The primary structure comprises 143 residues: Deoxyuridine 5'-triphosphate nucleotidohydrolase (143 aa).

This sequence belongs to the dUTPase family. Mg(2+) is required as a cofactor.

It catalyses the reaction dUTP + H2O = dUMP + diphosphate + H(+). Its function is as follows. This enzyme is involved in nucleotide metabolism: it produces dUMP, the immediate precursor of thymidine nucleotides and it decreases the intracellular concentration of dUTP so that uracil cannot be incorporated into DNA. This is Deoxyuridine 5'-triphosphate nucleotidohydrolase (DUT) from Yaba monkey tumor virus (strain VR587) (YMTV).